Consider the following 215-residue polypeptide: tRNA (guanine-N(7)-)-methyltransferase (215 aa).

Positions 44, 69, 96, and 118 each coordinate S-adenosyl-L-methionine. D118 is a catalytic residue. K122 is a substrate binding site. Residues 124–129 (RHEKRR) form an interaction with RNA region. Residues D154 and 192–195 (TEYE) each bind substrate.

The protein belongs to the class I-like SAM-binding methyltransferase superfamily. TrmB family.

It catalyses the reaction guanosine(46) in tRNA + S-adenosyl-L-methionine = N(7)-methylguanosine(46) in tRNA + S-adenosyl-L-homocysteine. The protein operates within tRNA modification; N(7)-methylguanine-tRNA biosynthesis. Its function is as follows. Catalyzes the formation of N(7)-methylguanine at position 46 (m7G46) in tRNA. This is tRNA (guanine-N(7)-)-methyltransferase from Limosilactobacillus fermentum (strain NBRC 3956 / LMG 18251) (Lactobacillus fermentum).